The primary structure comprises 208 residues: Uracil phosphoribosyltransferase (208 aa).

5-phospho-alpha-D-ribose 1-diphosphate contacts are provided by residues Arg78, Arg103, and 130 to 138 (DPMLATGGS). Uracil contacts are provided by residues Ile193 and 198-200 (GDA). Asp199 contacts 5-phospho-alpha-D-ribose 1-diphosphate.

This sequence belongs to the UPRTase family. Mg(2+) serves as cofactor.

It carries out the reaction UMP + diphosphate = 5-phospho-alpha-D-ribose 1-diphosphate + uracil. It functions in the pathway pyrimidine metabolism; UMP biosynthesis via salvage pathway; UMP from uracil: step 1/1. Its activity is regulated as follows. Allosterically activated by GTP. Functionally, catalyzes the conversion of uracil and 5-phospho-alpha-D-ribose 1-diphosphate (PRPP) to UMP and diphosphate. The chain is Uracil phosphoribosyltransferase from Pectobacterium atrosepticum (strain SCRI 1043 / ATCC BAA-672) (Erwinia carotovora subsp. atroseptica).